The primary structure comprises 211 residues: Holliday junction resolvase RecU (211 aa).

Residues Thr-87, Asp-89, Asp-102, and Gln-121 each contribute to the Mg(2+) site.

It belongs to the RecU family. The cofactor is Mg(2+).

The protein localises to the cytoplasm. The catalysed reaction is Endonucleolytic cleavage at a junction such as a reciprocal single-stranded crossover between two homologous DNA duplexes (Holliday junction).. Its function is as follows. Endonuclease that resolves Holliday junction intermediates in genetic recombination. Cleaves mobile four-strand junctions by introducing symmetrical nicks in paired strands. Promotes annealing of linear ssDNA with homologous dsDNA. Required for DNA repair, homologous recombination and chromosome segregation. The polypeptide is Holliday junction resolvase RecU (Limosilactobacillus fermentum (strain NBRC 3956 / LMG 18251) (Lactobacillus fermentum)).